The primary structure comprises 127 residues: Aspartate 1-decarboxylase (127 aa).

Ser25 (schiff-base intermediate with substrate; via pyruvic acid) is an active-site residue. At Ser25 the chain carries Pyruvic acid (Ser). Residue Thr57 participates in substrate binding. Tyr58 functions as the Proton donor in the catalytic mechanism. 73–75 contributes to the substrate binding site; that stretch reads GAA.

It belongs to the PanD family. Heterooctamer of four alpha and four beta subunits. Requires pyruvate as cofactor. Is synthesized initially as an inactive proenzyme, which is activated by self-cleavage at a specific serine bond to produce a beta-subunit with a hydroxyl group at its C-terminus and an alpha-subunit with a pyruvoyl group at its N-terminus.

Its subcellular location is the cytoplasm. It catalyses the reaction L-aspartate + H(+) = beta-alanine + CO2. Its pathway is cofactor biosynthesis; (R)-pantothenate biosynthesis; beta-alanine from L-aspartate: step 1/1. Functionally, catalyzes the pyruvoyl-dependent decarboxylation of aspartate to produce beta-alanine. This Bacillus cereus (strain ATCC 10987 / NRS 248) protein is Aspartate 1-decarboxylase.